A 135-amino-acid polypeptide reads, in one-letter code: PTS system sorbose-specific EIIA component (135 aa).

Residues 1-131 (MVHAIFCAHG…CVVWQQPETV (131 aa)) enclose the PTS EIIA type-4 domain. Histidine 9 functions as the Tele-phosphohistidine intermediate in the catalytic mechanism. Phosphohistidine; by HPr is present on histidine 9.

Its subcellular location is the cytoplasm. The phosphoenolpyruvate-dependent sugar phosphotransferase system (PTS), a major carbohydrate active transport system, catalyzes the phosphorylation of incoming sugar substrates concomitant with their translocation across the cell membrane. The enzyme II SorABFM PTS system is involved in L-sorbose transport. The protein is PTS system sorbose-specific EIIA component of Klebsiella pneumoniae.